A 422-amino-acid chain; its full sequence is L-threonine dehydratase biosynthetic IlvA (422 aa).

N6-(pyridoxal phosphate)lysine is present on K60. Pyridoxal 5'-phosphate is bound by residues N87, 190-194 (GGGGL), and S315. The region spanning 339-413 (HYFIVNFPQR…KPFHYVEVNK (75 aa)) is the ACT-like domain.

It belongs to the serine/threonine dehydratase family. As to quaternary structure, homotetramer. Requires pyridoxal 5'-phosphate as cofactor.

The enzyme catalyses L-threonine = 2-oxobutanoate + NH4(+). Its pathway is amino-acid biosynthesis; L-isoleucine biosynthesis; 2-oxobutanoate from L-threonine: step 1/1. Catalyzes the anaerobic formation of alpha-ketobutyrate and ammonia from threonine in a two-step reaction. The first step involved a dehydration of threonine and a production of enamine intermediates (aminocrotonate), which tautomerizes to its imine form (iminobutyrate). Both intermediates are unstable and short-lived. The second step is the nonenzymatic hydrolysis of the enamine/imine intermediates to form 2-ketobutyrate and free ammonia. In the low water environment of the cell, the second step is accelerated by RidA. This is L-threonine dehydratase biosynthetic IlvA (ilvA) from Bacillus subtilis (strain 168).